Here is a 129-residue protein sequence, read N- to C-terminus: Large ribosomal subunit protein bL17 (129 aa).

The protein belongs to the bacterial ribosomal protein bL17 family. As to quaternary structure, part of the 50S ribosomal subunit. Contacts protein L32.

The protein is Large ribosomal subunit protein bL17 of Stutzerimonas stutzeri (strain A1501) (Pseudomonas stutzeri).